Here is a 423-residue protein sequence, read N- to C-terminus: Protein CLP1 homolog (423 aa).

ATP is bound by residues glutamate 16, lysine 57, and 119-124 (DVGKST).

The protein belongs to the Clp1 family. Clp1 subfamily.

It is found in the nucleus. Required for endonucleolytic cleavage during polyadenylation-dependent pre-mRNA 3'-end formation. The polypeptide is Protein CLP1 homolog (cbc) (Drosophila yakuba (Fruit fly)).